Here is a 143-residue protein sequence, read N- to C-terminus: Flagellar assembly factor FliW (143 aa).

Belongs to the FliW family. As to quaternary structure, interacts with translational regulator CsrA and flagellin(s).

Its subcellular location is the cytoplasm. Functionally, acts as an anti-CsrA protein, binds CsrA and prevents it from repressing translation of its target genes, one of which is flagellin. Binds to flagellin and participates in the assembly of the flagellum. The chain is Flagellar assembly factor FliW from Bacillus velezensis (strain DSM 23117 / BGSC 10A6 / LMG 26770 / FZB42) (Bacillus amyloliquefaciens subsp. plantarum).